A 225-amino-acid chain; its full sequence is MDLRAGDSWGMLACLCTVLWHLPAVPALNRTGDPGPGPSIQKTYDLTRYLEHQLRSLAGTYLNYLGPPFNEPDFNPPRLGAETLPRATVDLEVWRSLNDKLRLTQNYEAYSHLLCYLRGLNRQAATAELRRSLAHFCTSLQGLLGSIAGVMAALGYPLPQPLPGTEPTWTPGPAHSDFLQKMDDFWLLKELQTWLWRSAKDFNRLKKKMQPPAAAVTLHLGAHGF.

A signal peptide spans 1–27; sequence MDLRAGDSWGMLACLCTVLWHLPAVPA. N29 carries an N-linked (GlcNAc...) asparagine glycan.

It belongs to the IL-6 superfamily. In terms of assembly, forms a heteromeric complex with cardiotrophin-like cytokine CRLF1/CLF-1; the CRLF1-CLCF1 complex is a ligand for the ciliary neurotrophic factor receptor/CNTFR. The CRLF1-CLCF1 heterodimer binds SORL1 (via N-terminal ectodomain); within this complex, the interaction is mediated predominantly by the CRLF1 moiety. The tripartite signaling complex formed by CRLF1, CLCF1 and CNTFR also binds SORL1. As to expression, expressed predominantly in lymph nodes, spleen, peripheral blood lymphocytes, bone marrow, and fetal liver.

It is found in the secreted. Its function is as follows. In complex with CRLF1, forms a heterodimeric neurotropic cytokine that plays a crucial role during neuronal development. Also stimulates B-cells. Binds to and activates the ILST/gp130 receptor. In Homo sapiens (Human), this protein is Cardiotrophin-like cytokine factor 1 (CLCF1).